Reading from the N-terminus, the 73-residue chain is Small, acid-soluble spore protein C5 (73 aa).

The protein belongs to the alpha/beta-type SASP family.

Its function is as follows. SASP are bound to spore DNA. They are double-stranded DNA-binding proteins that cause DNA to change to an a-like conformation. They protect the DNA backbone from chemical and enzymatic cleavage and are thus involved in dormant spore's high resistance to UV light. The polypeptide is Small, acid-soluble spore protein C5 (SASP-C5) (Priestia megaterium (Bacillus megaterium)).